A 280-amino-acid polypeptide reads, in one-letter code: Probable 2-(5''-triphosphoribosyl)-3'-dephosphocoenzyme-A synthase (280 aa).

The protein belongs to the CitG/MdcB family.

The enzyme catalyses 3'-dephospho-CoA + ATP = 2'-(5''-triphospho-alpha-D-ribosyl)-3'-dephospho-CoA + adenine. The protein is Probable 2-(5''-triphosphoribosyl)-3'-dephosphocoenzyme-A synthase of Lactiplantibacillus plantarum (strain ATCC BAA-793 / NCIMB 8826 / WCFS1) (Lactobacillus plantarum).